Here is a 746-residue protein sequence, read N- to C-terminus: Exostosin-1 (746 aa).

At 1–7 the chain is on the cytoplasmic side; that stretch reads MQAKKRY. Residues 8 to 28 traverse the membrane as a helical; Signal-anchor for type II membrane protein segment; that stretch reads FILLSAGSCLALLFYFGGVQF. The Lumenal portion of the chain corresponds to 29–746; it reads RASRSHSRRE…RKKYRDIERL (718 aa). Asn-89 carries an N-linked (GlcNAc...) asparagine glycan. 2 disulfides stabilise this stretch: Cys-98–Cys-103 and Cys-109–Cys-152. The a protein site is built by Leu-166 and Tyr-203. UDP contacts are provided by Lys-267, Lys-269, Tyr-271, and Arg-280. The cysteines at positions 298 and 312 are disulfide-linked. An a protein-binding site is contributed by His-300. Positions 319 and 324 each coordinate UDP. The N-linked (GlcNAc...) asparagine glycan is linked to Asn-330. 2 cysteine pairs are disulfide-bonded: Cys-334-Cys-355 and Cys-652-Cys-704. 2 residues coordinate UDP: Arg-346 and Glu-349.

It belongs to the glycosyltransferase 47 family. In terms of assembly, part of the heparan sulfate polymerase, a dimeric complex composed of EXT1 and EXT2. Could also form homooligomeric complexes. Interacts with NDST1. Post-translationally, N-glycosylated.

The protein resides in the golgi apparatus membrane. Its subcellular location is the golgi apparatus. It is found in the cis-Golgi network membrane. The protein localises to the endoplasmic reticulum membrane. It catalyses the reaction 3-O-{alpha-D-GlcNAc-[(1-&gt;4)-beta-D-GlcA-(1-&gt;4)-alpha-D-GlcNAc](n)-(1-&gt;4)-beta-D-GlcA-(1-&gt;3)-beta-D-Gal-(1-&gt;3)-beta-D-Gal-(1-&gt;4)-beta-D-Xyl}-L-seryl-[protein] + UDP-alpha-D-glucuronate = 3-O-{[(1-&gt;4)-beta-D-GlcA-(1-&gt;4)-alpha-D-GlcNAc](n+1)-(1-&gt;4)-beta-D-GlcA-(1-&gt;3)-beta-D-Gal-(1-&gt;3)-beta-D-Gal-(1-&gt;4)-beta-D-Xyl}-L-seryl-[protein] + UDP + H(+). It participates in protein modification; protein glycosylation. Functionally, glycosyltransferase forming with EXT2 the heterodimeric heparan sulfate polymerase which catalyzes the elongation of the heparan sulfate glycan backbone. Glycan backbone extension consists in the alternating transfer of (1-&gt;4)-beta-D-GlcA and (1-&gt;4)-alpha-D-GlcNAc residues from their respective UDP-sugar donors. Both EXT1 and EXT2 are required for the full activity of the polymerase since EXT1 bears the N-acetylglucosaminyl-proteoglycan 4-beta-glucuronosyltransferase activity within the complex while EXT2 carries the glucuronosyl-N-acetylglucosaminyl-proteoglycan 4-alpha-N-acetylglucosaminyltransferase activity. Heparan sulfate proteoglycans are ubiquitous components of the extracellular matrix and play an important role in tissue homeostasis and signaling. The chain is Exostosin-1 from Mus musculus (Mouse).